The chain runs to 266 residues: MILLVDAGNTNIVLGVHNGERYIASWRISSEGNKTSDEYGIQVMQLFNLSDIDPKNITGVIVSSVVPNIMHSLENMLRKCFCHEPIIVGPGVKTGINIKYDNPREVGADRIVNAVAAYEIYKRPVIIIDFGTATTFCAVRANGDYLGGCICPGIRISADALFERAAKLPRVELEVPKNMICKNTVSSMQSGIIFGYIGQVEYIVKKMKQEMKNSKYKEEPFVLATGGLANLIAKETDVIDKVDSDLTLEGLKILYEKNKEIEISQR.

6–13 provides a ligand contact to ATP; the sequence is DAGNTNIV. Residues Y100 and 107–110 contribute to the substrate site; that span reads GADR. Residue D109 is the Proton acceptor of the active site. Residue D129 coordinates K(+). T132 serves as a coordination point for ATP. T184 lines the substrate pocket.

The protein belongs to the type III pantothenate kinase family. Homodimer. The cofactor is NH4(+). K(+) serves as cofactor.

It localises to the cytoplasm. The catalysed reaction is (R)-pantothenate + ATP = (R)-4'-phosphopantothenate + ADP + H(+). It participates in cofactor biosynthesis; coenzyme A biosynthesis; CoA from (R)-pantothenate: step 1/5. Functionally, catalyzes the phosphorylation of pantothenate (Pan), the first step in CoA biosynthesis. The polypeptide is Type III pantothenate kinase (Clostridium beijerinckii (strain ATCC 51743 / NCIMB 8052) (Clostridium acetobutylicum)).